The chain runs to 451 residues: Eukaryotic translation initiation factor 3 subunit E (451 aa).

A PCI domain is found at 245–425 (PFFNHEPARD…GTVVMNHPPS (181 aa)).

It belongs to the eIF-3 subunit E family. As to quaternary structure, component of the eukaryotic translation initiation factor 3 (eIF-3) complex.

The protein resides in the cytoplasm. Its function is as follows. Component of the eukaryotic translation initiation factor 3 (eIF-3) complex, which is involved in protein synthesis of a specialized repertoire of mRNAs and, together with other initiation factors, stimulates binding of mRNA and methionyl-tRNAi to the 40S ribosome. The eIF-3 complex specifically targets and initiates translation of a subset of mRNAs involved in cell proliferation. This chain is Eukaryotic translation initiation factor 3 subunit E (int6), found in Sclerotinia sclerotiorum (strain ATCC 18683 / 1980 / Ss-1) (White mold).